The primary structure comprises 352 residues: MSKQPSLSYKDAGVDIDAGEALVERIKGVAKRTARPEVMGGLGGFGALCEIPAGYKQPVLVSGTDGVGTKLRLALNLNKHDSIGQDLVAMCVNDLVVCGAEPLFFLDYYATGKLNVDVAATVVTGIGAGCELAGCSLVGGETAEMPGMYEGEDYDLAGFCVGVVEKADIIDGSKVVTGDALIALPSSGPHSNGYSLIRKILEVSGTDIDNTQLDGKPLADLLMAPTRIYVKPLLQLIKQTGAVKAMAHITGGGLLDNIPRVLPKNAQAVVDVASWQRPVVFDFLQEKGNVDEHEMHRVLNCGVGMVICVAQDQVENALNVLRAEGEQPWVIGRIDVAAEGAAQVELHNLKAH.

Belongs to the AIR synthase family.

Its subcellular location is the cytoplasm. The enzyme catalyses 2-formamido-N(1)-(5-O-phospho-beta-D-ribosyl)acetamidine + ATP = 5-amino-1-(5-phospho-beta-D-ribosyl)imidazole + ADP + phosphate + H(+). Its pathway is purine metabolism; IMP biosynthesis via de novo pathway; 5-amino-1-(5-phospho-D-ribosyl)imidazole from N(2)-formyl-N(1)-(5-phospho-D-ribosyl)glycinamide: step 2/2. The polypeptide is Phosphoribosylformylglycinamidine cyclo-ligase (Pseudomonas entomophila (strain L48)).